The sequence spans 172 residues: Large ribosomal subunit protein uL10 (172 aa).

It belongs to the universal ribosomal protein uL10 family. As to quaternary structure, part of the ribosomal stalk of the 50S ribosomal subunit. The N-terminus interacts with L11 and the large rRNA to form the base of the stalk. The C-terminus forms an elongated spine to which L12 dimers bind in a sequential fashion forming a multimeric L10(L12)X complex.

In terms of biological role, forms part of the ribosomal stalk, playing a central role in the interaction of the ribosome with GTP-bound translation factors. In Methylobacterium radiotolerans (strain ATCC 27329 / DSM 1819 / JCM 2831 / NBRC 15690 / NCIMB 10815 / 0-1), this protein is Large ribosomal subunit protein uL10.